We begin with the raw amino-acid sequence, 622 residues long: MSLDISQFPVLAQANTPNELRQLPQALLPQVADELREFLLKSVGISSGHFASGLGTVELTVALHYVYNTPFDRLIWDVGHQAYPHKILTGRRDKMHTIRQKDGLHPFPWREESEYDTFSVGHSGTSISAALAMAIAAEKEQAGRKVVAVIGDGAMTGGMVFEAMNHAGDLHNDMLVVLNDNEMSISENVGALNNHLAQLMSGRFYTTLREGGKKVLKGMPVIKEMAKRTEEHLKGMVVPGTLFEELGFNYIGPIDGHDVDALVETMRNMRNLKGPQVLHIMTKKGRGYEPAEKDPIGWHAVPKFDPSLFKKPTTKPGLPTFSQVFGKWLCDIAEQDEKVLAITPAMREGSGMVEFSQRFPKQYFDAAIAEQHAVTLSAGFACEGFKPVVAIYSTFLQRAYDQLIHDVALQKLPVLFAIDRGGIVGADGPTHQGAFDLSFMRCIPNMVIMAPSDENECRQMLYTGYCYDAGPSAVRYPRGCATGATQVEAMTALPIGKGVIKRVGKRIAILNFGTLLASALTAAESLDATVVDMRFVKPLDVDLVKEMAQTHEVLVTVEENAIMGGAGAGVLEQLQKLRMPKAVLQIGLPDEFIKHGSPEEVTHDLQLDAEGILAQINAYLAQ.

Thiamine diphosphate contacts are provided by residues histidine 80 and 121-123; that span reads GHS. Aspartate 152 is a binding site for Mg(2+). Thiamine diphosphate is bound by residues 153-154, asparagine 181, tyrosine 288, and glutamate 370; that span reads GA. Asparagine 181 serves as a coordination point for Mg(2+).

It belongs to the transketolase family. DXPS subfamily. Homodimer. It depends on Mg(2+) as a cofactor. Thiamine diphosphate is required as a cofactor.

It carries out the reaction D-glyceraldehyde 3-phosphate + pyruvate + H(+) = 1-deoxy-D-xylulose 5-phosphate + CO2. It participates in metabolic intermediate biosynthesis; 1-deoxy-D-xylulose 5-phosphate biosynthesis; 1-deoxy-D-xylulose 5-phosphate from D-glyceraldehyde 3-phosphate and pyruvate: step 1/1. Its function is as follows. Catalyzes the acyloin condensation reaction between C atoms 2 and 3 of pyruvate and glyceraldehyde 3-phosphate to yield 1-deoxy-D-xylulose-5-phosphate (DXP). The polypeptide is 1-deoxy-D-xylulose-5-phosphate synthase (Shewanella baltica (strain OS155 / ATCC BAA-1091)).